Reading from the N-terminus, the 235-residue chain is Hydroxyacylglutathione hydrolase (235 aa).

Histidine 53, histidine 55, aspartate 57, histidine 58, histidine 109, aspartate 127, and histidine 165 together coordinate Zn(2+).

It belongs to the metallo-beta-lactamase superfamily. Glyoxalase II family. In terms of assembly, monomer. The cofactor is Zn(2+).

It carries out the reaction an S-(2-hydroxyacyl)glutathione + H2O = a 2-hydroxy carboxylate + glutathione + H(+). It functions in the pathway secondary metabolite metabolism; methylglyoxal degradation; (R)-lactate from methylglyoxal: step 2/2. Its function is as follows. Thiolesterase that catalyzes the hydrolysis of S-D-lactoyl-glutathione to form glutathione and D-lactic acid. The chain is Hydroxyacylglutathione hydrolase from Glaesserella parasuis serovar 5 (strain SH0165) (Haemophilus parasuis).